The following is a 107-amino-acid chain: Integration host factor subunit alpha (107 aa).

It belongs to the bacterial histone-like protein family. Heterodimer of an alpha and a beta chain.

Functionally, this protein is one of the two subunits of integration host factor, a specific DNA-binding protein that functions in genetic recombination as well as in transcriptional and translational control. The protein is Integration host factor subunit alpha of Brucella anthropi (strain ATCC 49188 / DSM 6882 / CCUG 24695 / JCM 21032 / LMG 3331 / NBRC 15819 / NCTC 12168 / Alc 37) (Ochrobactrum anthropi).